The sequence spans 658 residues: Protein cueball (658 aa).

The Extracellular segment spans residues 1–543 (MSGVTARMEN…SYCKNSFNRT (543 aa)). 2 N-linked (GlcNAc...) asparagine glycosylation sites follow: Asn25 and Asn122. LDL-receptor class B repeat units lie at residues 100–142 (RKLY…NHDL), 152–195 (RHLY…DHYS), and 196–241 (NRIY…NSRY). EGF-like domains are found at residues 352–384 (EIPI…FEGE), 387–422 (DRSK…KRCE), and 458–495 (EEYT…KRCE). 8 disulfides stabilise this stretch: Cys356–Cys365, Cys360–Cys375, Cys391–Cys401, Cys395–Cys410, Cys412–Cys421, Cys462–Cys472, Cys466–Cys483, and Cys485–Cys494. Residues Asn400 and Asn415 are each glycosylated (N-linked (GlcNAc...) asparagine). Residue Asn476 is glycosylated (N-linked (GlcNAc...) asparagine). N-linked (GlcNAc...) asparagine glycosylation is present at Asn541. The chain crosses the membrane as a helical span at residues 544–564 (VVYASLAFAASLFILMVILLI). Over 565-658 (VRRFYEEGRP…SCAGGDKNLP (94 aa)) the chain is Cytoplasmic.

This sequence belongs to the cueball family.

It localises to the cell membrane. In terms of biological role, has a role in spermatogenesis and oogenesis. This chain is Protein cueball, found in Culex quinquefasciatus (Southern house mosquito).